A 336-amino-acid polypeptide reads, in one-letter code: D-erythrose-4-phosphate dehydrogenase (336 aa).

NAD(+) contacts are provided by residues 11–12 (RI) and Arg80. Residues 153–155 (SCT), Arg199, 212–213 (TK), and Arg235 each bind substrate. The Nucleophile role is filled by Cys154. Asn317 contributes to the NAD(+) binding site.

This sequence belongs to the glyceraldehyde-3-phosphate dehydrogenase family. Epd subfamily. Homotetramer.

The protein localises to the cytoplasm. It catalyses the reaction D-erythrose 4-phosphate + NAD(+) + H2O = 4-phospho-D-erythronate + NADH + 2 H(+). The protein operates within cofactor biosynthesis; pyridoxine 5'-phosphate biosynthesis; pyridoxine 5'-phosphate from D-erythrose 4-phosphate: step 1/5. Functionally, catalyzes the NAD-dependent conversion of D-erythrose 4-phosphate to 4-phosphoerythronate. The chain is D-erythrose-4-phosphate dehydrogenase from Aeromonas hydrophila subsp. hydrophila (strain ATCC 7966 / DSM 30187 / BCRC 13018 / CCUG 14551 / JCM 1027 / KCTC 2358 / NCIMB 9240 / NCTC 8049).